Consider the following 571-residue polypeptide: MSSMTTTDNKAFLNELARLVGSSHLLTDPAKTARYRKGFRSGQGDALAVVFPGSLLELWRVLKACVTADKIILMQAANTGLTEGSTPNGNDYDRDVVIISTLRLDKLHVLGKGEQVLAYPGTTLYSLEKALKPLGREPHSVIGSSCIGASVIGGICNNSGGSLVQRGPAYTEMSLFARINEDGKLTLVNHLGIDLGETPEQILSKLDDDRIKDDDVRHDGRHAHDYDYVHRVRDIEADTPARYNADPDRLFESSGCAGKLAVFAVRLDTFEAEKNQQVFYIGTNQPEVLTEIRRHILANFENLPVAGEYMHRDIYDIAEKYGKDTFLMIDKLGTDKMPFFFNLKGRTDAMLEKVKFFRPHFTDRAMQKFGHLFPSHLPPRMKNWRDKYEHHLLLKMAGDGVGEAKSWLVDYFKQAEGDFFVCTPEEGSKAFLHRFAAAGAAIRYQAVHSDEVEDILALDIALRRNDTEWYEHLPPEIDSQLVHKLYYGHFMCYVFHQDYIVKKGVDVHALKEQMLELLQQRGAQYPAEHNVGHLYKAPETLQKFYRENDPTNSMNPGIGKTSKRKNWQEVE.

The region spanning 42 to 213 (GQGDALAVVF…SKLDDDRIKD (172 aa)) is the FAD-binding PCMH-type domain. FAD contacts are provided by residues 76 to 80 (AANTG), 84 to 85 (GS), Gly143, Ser150, Gly160, and Val262. Residues 546 to 571 (RENDPTNSMNPGIGKTSKRKNWQEVE) are disordered.

The protein belongs to the quinone-dependent D-lactate dehydrogenase family. FAD serves as cofactor.

It localises to the cell inner membrane. The enzyme catalyses (R)-lactate + a quinone = a quinol + pyruvate. With respect to regulation, inhibited by 2-hydroxy-3-butynoic acid, but not by p-chloromercuribenzoate, n-ethylmaleimide, or 5,5'-dithiobis(2-nitrobenzoic acid). Catalyzes the oxidation of D-lactate to pyruvate. Electrons derived from D-lactate oxidation are transferred to the ubiquinone/cytochrome electron transfer chain, where they may be used to provide energy for the active transport of a variety of amino acids and sugars across the membrane. This Escherichia coli (strain K12) protein is Quinone-dependent D-lactate dehydrogenase.